We begin with the raw amino-acid sequence, 184 residues long: Ribosome-recycling factor (184 aa).

The protein belongs to the RRF family.

It is found in the cytoplasm. Its function is as follows. Responsible for the release of ribosomes from messenger RNA at the termination of protein biosynthesis. May increase the efficiency of translation by recycling ribosomes from one round of translation to another. This Borrelia turicatae (strain 91E135) protein is Ribosome-recycling factor.